Consider the following 460-residue polypeptide: Probable carboxylesterase 11 (460 aa).

Polar residues-rich tracts occupy residues 26 to 35 (QSSGDESSSD) and 132 to 145 (NSYG…SPEA). Disordered regions lie at residues 26-52 (QSSG…APNP) and 132-161 (NSYG…SSGG). The Involved in the stabilization of the negatively charged intermediate by the formation of the oxyanion hole motif lies at 173–175 (HGG). Catalysis depends on residues S289, D392, and H422.

Belongs to the 'GDXG' lipolytic enzyme family. As to expression, expressed in roots, leaves, stems, flowers and siliques.

The catalysed reaction is a carboxylic ester + H2O = an alcohol + a carboxylate + H(+). Carboxylesterase acting on esters with varying acyl chain length. This chain is Probable carboxylesterase 11 (CXE11), found in Arabidopsis thaliana (Mouse-ear cress).